The chain runs to 347 residues: uncharacterized protein (347 aa).

5 residues coordinate Mn(2+): Asp-207, Asp-218, His-279, Glu-312, and Glu-326.

Belongs to the peptidase M24B family. The cofactor is Mn(2+).

This is an uncharacterized protein from Methanocaldococcus jannaschii (strain ATCC 43067 / DSM 2661 / JAL-1 / JCM 10045 / NBRC 100440) (Methanococcus jannaschii).